The chain runs to 915 residues: Rab3 GTPase-activating protein catalytic subunit (915 aa).

It belongs to the Rab3-GAP catalytic subunit family. As to quaternary structure, the Rab3 GTPase-activating complex is a heterodimer composed of rbg-1 and rbg-2.

The protein resides in the cytoplasm. In terms of biological role, probable catalytic subunit of a GTPase activating protein that has specificity for Rab3 subfamily. Rab3 proteins are involved in regulated exocytosis of neurotransmitters and hormones. Specifically converts active Rab3-GTP to the inactive form Rab3-GDP. This chain is Rab3 GTPase-activating protein catalytic subunit (rbg-1), found in Caenorhabditis elegans.